The primary structure comprises 778 residues: High affinity nerve growth factor receptor (778 aa).

A signal peptide spans Trp-1 to Leu-14. Residues Ala-15–Gly-400 are Extracellular-facing. Cysteines 18 and 20 form a disulfide. 2 LRR repeats span residues Asp-71 to Asp-92 and Arg-95 to His-116. Residues Asn-100, Asn-130, Asn-143, Asn-151, Asn-194, Asn-234, Asn-262, Asn-300, Asn-320, Asn-340, and Asn-384 are each glycosylated (N-linked (GlcNAc...) asparagine). The LRRCT domain occupies Asn-127–Pro-175. Cysteines 133 and 173 form a disulfide. 2 consecutive Ig-like C2-type domains span residues Pro-175 to Asn-262 and Trp-281 to Asn-347. A disulfide bridge links Cys-282 with Cys-327. Residues Val-401–Ala-421 form a helical membrane-spanning segment. The Cytoplasmic segment spans residues Leu-422–Gly-778. Phosphotyrosine; by autocatalysis is present on Tyr-479. Residues Ile-493 to Leu-763 form the Protein kinase domain. Residues Leu-499 to Val-507 and Lys-527 contribute to the ATP site. The Proton acceptor role is filled by Asp-633. Tyr-659, Tyr-663, Tyr-664, and Tyr-773 each carry phosphotyrosine; by autocatalysis.

This sequence belongs to the protein kinase superfamily. Tyr protein kinase family. Insulin receptor subfamily. In terms of assembly, exists in a dynamic equilibrium between monomeric (low affinity) and dimeric (high affinity) structures. Homodimerization is induced by NGF dimer binding. Interacts with PTPRS. Post-translationally, ligand-mediated auto-phosphorylation. Ubiquitinated. Undergoes polyubiquitination upon activation; regulated by NGFR. Ubiquitination regulates the internalization of the receptor.

It localises to the cell membrane. Its subcellular location is the early endosome membrane. It is found in the late endosome membrane. The protein localises to the recycling endosome membrane. The enzyme catalyses L-tyrosyl-[protein] + ATP = O-phospho-L-tyrosyl-[protein] + ADP + H(+). With respect to regulation, the pro-survival signaling effect of NTRK1 in neurons requires its endocytosis into signaling early endosomes and its retrograde axonal transport. In terms of biological role, receptor tyrosine kinase involved in the development and the maturation of the central and peripheral nervous systems through regulation of proliferation, differentiation and survival of sympathetic and nervous neurons. High affinity receptor for NGF which is its primary ligand, it can also bind and be activated by NTF3/neurotrophin-3. Upon dimeric NGF ligand-binding, undergoes homodimerization, autophosphorylation and activation. Recruits, phosphorylates and/or activates several downstream effectors that regulate distinct overlapping signaling cascades driving cell survival and differentiation. In absence of ligand and activation, may promote cell death, making the survival of neurons dependent on trophic factors. In Gallus gallus (Chicken), this protein is High affinity nerve growth factor receptor (NTRK1).